A 327-amino-acid polypeptide reads, in one-letter code: MFALSSLVSEGDPEVTSRYVKGVQLALDLSENTPGQFKLIETPLNSFLLVSNVMPEVQPICSGLPALRPDFSNLHLPRLEKLQRVLGQGFGAAGEEIALDPSHVETHEKGQVFYNHYATEEWTWALTLNKDALLREAVDGLCDPGTWKGLLPDDPLPLLWLLFNGPASFCRADCCLYKQHCGYPGPVLLPGHMYAPKRDLLSFVNHALKYTKFLYGDFSGTWAAACRPPFATSRIQRVVSQMKIIDASDTYISHTCLLCHIYQQNSIIAGQGTHVGGILLLSGKGTQYITGNVQTQRCPTTGDYLIIPSYDIPAIITMIKENGLNQL.

Belongs to the herpesviridae UL95 family. In terms of assembly, interacts with ORF24; this interaction may serve as a core scaffold for the assembly of the viral transcription initiation complex. Interacts with ORF66. Interacts with ORF18. Interacts with ORF23. Interacts with ORF31. Interacts with host EPAS1; this interaction stabilizes host EPAS1, ensuring its transcriptional activity.

The protein localises to the host nucleus. In terms of biological role, participates in the expression of late viral mRNAs in part by interacting with ORF24. Expressed before viral DNA replication, assembles at the viral pre-replication complexes (pre-RCs) and thus serves as a hub for recruiting a viral transcription complex to ORF24 to promote late viral gene expression. Also plays a regulatory role in the viral life cycle by regulating host transcriptional regulators HIF1A and EPAS1. This Homo sapiens (Human) protein is Protein UL95 homolog (ORF34).